A 502-amino-acid chain; its full sequence is Type-2 serine--tRNA ligase (502 aa).

Alanine 304 is a binding site for L-serine. Cysteine 306 contacts Zn(2+). Arginine 336 lines the L-serine pocket. Residues 336–338 and 347–348 contribute to the ATP site; these read RYE and RV. L-serine is bound by residues 353–355 and glutamine 400; that span reads RVE. Residue glutamate 355 participates in Zn(2+) binding. ATP is bound at residue glutamate 432. Asparagine 435 contributes to the L-serine binding site. Cysteine 461 serves as a coordination point for Zn(2+). Position 468 (arginine 468) interacts with ATP.

The protein belongs to the class-II aminoacyl-tRNA synthetase family. Type-2 seryl-tRNA synthetase subfamily. As to quaternary structure, homodimer. The cofactor is Zn(2+).

The protein localises to the cytoplasm. It catalyses the reaction tRNA(Ser) + L-serine + ATP = L-seryl-tRNA(Ser) + AMP + diphosphate + H(+). The catalysed reaction is tRNA(Sec) + L-serine + ATP = L-seryl-tRNA(Sec) + AMP + diphosphate + H(+). The protein operates within aminoacyl-tRNA biosynthesis; selenocysteinyl-tRNA(Sec) biosynthesis; L-seryl-tRNA(Sec) from L-serine and tRNA(Sec): step 1/1. Catalyzes the attachment of serine to tRNA(Ser). Is also able to aminoacylate tRNA(Sec) with serine, to form the misacylated tRNA L-seryl-tRNA(Sec), which will be further converted into selenocysteinyl-tRNA(Sec). This chain is Type-2 serine--tRNA ligase, found in Methanococcoides burtonii (strain DSM 6242 / NBRC 107633 / OCM 468 / ACE-M).